We begin with the raw amino-acid sequence, 223 residues long: DNA mismatch repair protein MutH (223 aa).

It belongs to the MutH family.

It is found in the cytoplasm. In terms of biological role, sequence-specific endonuclease that cleaves unmethylated GATC sequences. It is involved in DNA mismatch repair. The polypeptide is DNA mismatch repair protein MutH (Shewanella baltica (strain OS223)).